We begin with the raw amino-acid sequence, 176 residues long: NAD(P)H-quinone oxidoreductase subunit 6, chloroplastic (176 aa).

5 helical membrane passes run 10 to 30, 32 to 52, 61 to 81, 92 to 112, and 152 to 172; these read FLLV…VLLP, PIFS…LYIL, AQLL…VMFM, LWTV…FSLM, and FFLP…GAIS.

It belongs to the complex I subunit 6 family. NDH is composed of at least 16 different subunits, 5 of which are encoded in the nucleus.

It localises to the plastid. It is found in the chloroplast thylakoid membrane. It carries out the reaction a plastoquinone + NADH + (n+1) H(+)(in) = a plastoquinol + NAD(+) + n H(+)(out). The catalysed reaction is a plastoquinone + NADPH + (n+1) H(+)(in) = a plastoquinol + NADP(+) + n H(+)(out). Functionally, NDH shuttles electrons from NAD(P)H:plastoquinone, via FMN and iron-sulfur (Fe-S) centers, to quinones in the photosynthetic chain and possibly in a chloroplast respiratory chain. The immediate electron acceptor for the enzyme in this species is believed to be plastoquinone. Couples the redox reaction to proton translocation, and thus conserves the redox energy in a proton gradient. The protein is NAD(P)H-quinone oxidoreductase subunit 6, chloroplastic (ndhG) of Barbarea verna (Land cress).